Here is a 466-residue protein sequence, read N- to C-terminus: 55 kDa erythrocyte membrane protein (466 aa).

Threonine 2 carries the post-translational modification N-acetylthreonine. A phosphoserine mark is found at serine 13 and serine 19. A Phosphothreonine modification is found at threonine 49. Residues serine 52, serine 57, and serine 110 each carry the phosphoserine modification. In terms of domain architecture, PDZ spans 71-152 (LIQFEKVTEE…MISLKVIPNQ (82 aa)). One can recognise an SH3 domain in the interval 158–228 (ALQMFMRAQF…PSPELQEWRV (71 aa)). Position 243 is a phosphoserine (serine 243). The segment at 268–466 (VVSYEEVVRL…PQWVPVSWVY (199 aa)) is interaction with PALS1. Residues 282–451 (RKTLVLIGAS…TLKKLQEAFD (170 aa)) form the Guanylate kinase-like domain.

It belongs to the MAGUK family. In terms of assembly, heterodimer with PALS1. Interacts with DLG5 and NF2. Interacts (via guanylate kinase-like domain) with WHRN (via third PDZ domain). In terms of processing, palmitoylated. In terms of tissue distribution, ubiquitous.

It localises to the cell membrane. It is found in the cell projection. Its subcellular location is the stereocilium. Functionally, essential regulator of neutrophil polarity. Regulates neutrophil polarization by regulating AKT1 phosphorylation through a mechanism that is independent of PIK3CG activity. The protein is 55 kDa erythrocyte membrane protein (MPP1) of Homo sapiens (Human).